A 422-amino-acid polypeptide reads, in one-letter code: Dihydroorotase (422 aa).

2 residues coordinate Zn(2+): H59 and H61. Substrate is bound by residues 61 to 63 (HFR) and N93. 3 residues coordinate Zn(2+): D150, H177, and H230. N276 contributes to the substrate binding site. Residue D303 coordinates Zn(2+). D303 is an active-site residue. H307 serves as a coordination point for substrate.

This sequence belongs to the metallo-dependent hydrolases superfamily. DHOase family. Class I DHOase subfamily. Zn(2+) serves as cofactor.

The catalysed reaction is (S)-dihydroorotate + H2O = N-carbamoyl-L-aspartate + H(+). The protein operates within pyrimidine metabolism; UMP biosynthesis via de novo pathway; (S)-dihydroorotate from bicarbonate: step 3/3. Functionally, catalyzes the reversible cyclization of carbamoyl aspartate to dihydroorotate. The chain is Dihydroorotase from Streptococcus pneumoniae serotype 4 (strain ATCC BAA-334 / TIGR4).